We begin with the raw amino-acid sequence, 613 residues long: Dihydroxy-acid dehydratase (613 aa).

Residue Asp81 participates in Mg(2+) binding. Position 122 (Cys122) interacts with [2Fe-2S] cluster. Residues Asp123 and Lys124 each contribute to the Mg(2+) site. Lys124 is modified (N6-carboxylysine). Cys195 contributes to the [2Fe-2S] cluster binding site. Residue Glu491 coordinates Mg(2+). The active-site Proton acceptor is Ser517.

The protein belongs to the IlvD/Edd family. In terms of assembly, homodimer. [2Fe-2S] cluster is required as a cofactor. It depends on Mg(2+) as a cofactor.

It catalyses the reaction (2R)-2,3-dihydroxy-3-methylbutanoate = 3-methyl-2-oxobutanoate + H2O. The catalysed reaction is (2R,3R)-2,3-dihydroxy-3-methylpentanoate = (S)-3-methyl-2-oxopentanoate + H2O. It participates in amino-acid biosynthesis; L-isoleucine biosynthesis; L-isoleucine from 2-oxobutanoate: step 3/4. It functions in the pathway amino-acid biosynthesis; L-valine biosynthesis; L-valine from pyruvate: step 3/4. Its function is as follows. Functions in the biosynthesis of branched-chain amino acids. Catalyzes the dehydration of (2R,3R)-2,3-dihydroxy-3-methylpentanoate (2,3-dihydroxy-3-methylvalerate) into 2-oxo-3-methylpentanoate (2-oxo-3-methylvalerate) and of (2R)-2,3-dihydroxy-3-methylbutanoate (2,3-dihydroxyisovalerate) into 2-oxo-3-methylbutanoate (2-oxoisovalerate), the penultimate precursor to L-isoleucine and L-valine, respectively. The chain is Dihydroxy-acid dehydratase from Buchnera aphidicola subsp. Melaphis rhois.